The sequence spans 221 residues: Nucleolar protein 3 (221 aa).

Gly2 carries N-myristoyl glycine lipidation. One can recognise a CARD domain in the interval 4–95; that stretch reads MQERPSETID…MPDPAWDWQH (92 aa). Residues 20 to 70 form an essential for interaction with BAX region; that stretch reads VETLQADSGLLLDALVARGVLTGPEYEALDALPDAERRVRRLLLLVQSKGE. The interval 107 to 221 is disordered; that stretch reads PPCPGHWTPE…GDESEGCENT (115 aa). Residues 132–143 are compositionally biased toward acidic residues; that stretch reads EEEEIGGPEDSE. Thr149 is modified (phosphothreonine; by CK2). Composition is skewed to acidic residues over residues 165–201 and 209–221; these read PDLEQEMEPEPEPEVEPEPEPEPEPEPEPEPEPEPEP and FQEGDESEGCENT.

Oligomerizes (via CARD doamin). Interacts (via CARD domain) with CASP2; inhibits CASP2 activity in a phosphorylation-dependent manner. Interacts with CASP8; decreases CASP8 activity in a mitochondria localization- and phosphorylation-dependent manner and this interaction is dissociated by calcium. Interacts with TFPT; translocates NOL3 into the nucleus and negatively regulated TFPT-induced cell death. Interacts directly (via CARD domain) with FAS and FADD (via DED domain); inhibits death-inducing signaling complex (DISC) assembly by inhibiting the increase in FAS-FADD binding induced by FAS activation. Interacts (via CARD domain) with BAX (via a C-terminal 33 residues); inhibits BAX activation and translocation and consequently cytochrome c release from mitochondria. Interacts with PPM1G; may dephosphorylate NOL3. Interacts (via CARD domain) with BBC3 (via BH3 domain); preventing the association of BBC3 with BCL2 and resulting in activation of CASP8. Interacts (via CARD domain) with BAD(via BH3 domain); preventing the association of BAD with BCL2. Interacts directly (via CARD domain) with TNFRSF1A; inhibits TNF-signaling pathway. Phosphorylation at Thr-149 is required for its antiapoptotic effect by blocking death-inducing signaling complex (DISC) activity through the control of interaction with CASP8. Phosphorylation at Thr-149 results in translocation to mitochondria and this translocation enables the binding to CASP8. Dephosphorylated at Thr-149 by calcineurin; doesn't inhibit the association between FADD and CASP8 and the consequent apoptosis. In terms of processing, polyubiquitinated by MDM2; promoting proteasomal-dependent degradation in response to apoptotic stimuli. In terms of tissue distribution, highly expressed in skeletal muscle, heart and medulla.

The protein resides in the cytoplasm. It localises to the mitochondrion. Its subcellular location is the sarcoplasmic reticulum. The protein localises to the membrane. Apoptosis repressor that blocks multiple modes of cell death. Inhibits extrinsic apoptotic pathways through two different ways. Firstly by interacting with FAS and FADD upon FAS activation blocking death-inducing signaling complex (DISC) assembly. Secondly by interacting with CASP8 in a mitochondria localization- and phosphorylation-dependent manner, limiting the amount of soluble CASP8 available for DISC-mediated activation. Inhibits intrinsic apoptotic pathway in response to a wide range of stresses, through its interaction with BAX resulting in BAX inactivation, preventing mitochondrial dysfunction and release of pro-apoptotic factors. Inhibits calcium-mediated cell death by functioning as a cytosolic calcium buffer, dissociating its interaction with CASP8 and maintaining calcium homeostasis. Negatively regulates oxidative stress-induced apoptosis by phosphorylation-dependent suppression of the mitochondria-mediated intrinsic pathway, by blocking CASP2 activation and BAX translocation. Negatively regulates hypoxia-induced apoptosis in part by inhibiting the release of cytochrome c from mitochondria in a caspase-independent manner. Also inhibits TNF-induced necrosis by preventing TNF-signaling pathway through TNFRSF1A interaction abrogating the recruitment of RIPK1 to complex I. Finally through its role as apoptosis repressor, promotes vascular remodeling through inhibition of apoptosis and stimulation of proliferation, in response to hypoxia. Inhibits too myoblast differentiation through caspase inhibition. The chain is Nucleolar protein 3 (Nol3) from Rattus norvegicus (Rat).